Consider the following 394-residue polypeptide: Histidinol dehydrogenase (394 aa).

Residues tyrosine 113, glutamine 172, and asparagine 195 each contribute to the NAD(+) site. Residues threonine 218, glutamine 240, and histidine 243 each contribute to the substrate site. Zn(2+) is bound by residues glutamine 240 and histidine 243. Residues glutamate 294 and histidine 295 each act as proton acceptor in the active site. Substrate-binding residues include histidine 295, aspartate 327, glutamate 380, and histidine 385. Position 327 (aspartate 327) interacts with Zn(2+). Histidine 385 lines the Zn(2+) pocket.

It belongs to the histidinol dehydrogenase family. Requires Zn(2+) as cofactor.

It catalyses the reaction L-histidinol + 2 NAD(+) + H2O = L-histidine + 2 NADH + 3 H(+). It functions in the pathway amino-acid biosynthesis; L-histidine biosynthesis; L-histidine from 5-phospho-alpha-D-ribose 1-diphosphate: step 9/9. Functionally, catalyzes the sequential NAD-dependent oxidations of L-histidinol to L-histidinaldehyde and then to L-histidine. In Sulfurisphaera tokodaii (strain DSM 16993 / JCM 10545 / NBRC 100140 / 7) (Sulfolobus tokodaii), this protein is Histidinol dehydrogenase.